A 206-amino-acid polypeptide reads, in one-letter code: MLNAAAADRNKDPILSVLKSRVASNRRLFALEISSGTGQHVVHFAKAFPNITWQPSEVETQSLSSIEAYRQYHRLQNVQPPIYLDVSQSWQTWGGFPAESCDLIININMMHISPLACTTGLFHGVGQILKPQGLLLTYGPYAFNGSIVPQSNFDFDQSLRYRNPEWGLRDASFLTTLGQENGLRLEEIVDMPANNKCLLFRKDSVV.

The protein belongs to the UPF0585 family.

This is Methyltransferase-like 26 from Danio rerio (Zebrafish).